We begin with the raw amino-acid sequence, 511 residues long: Probable G-protein coupled receptor 152 (511 aa).

Residues 1–20 (MDTAVEANLGAAGHGPRTEL) are disordered. Residues 1–33 (MDTAVEANLGAAGHGPRTELSDEDYYPQGSWDT) lie on the Extracellular side of the membrane. Residues 34-54 (VFLVALLLLGLPANGLMAWLA) traverse the membrane as a helical segment. At 55–65 (GSQARHGAGTR) the chain is on the cytoplasmic side. A helical membrane pass occupies residues 66 to 86 (LALLLLSLALSDFLFLAAATF). Topologically, residues 87-105 (QILEIQHGGHWPLGTAACR) are extracellular. Cysteines 104 and 182 form a disulfide. A helical transmembrane segment spans residues 106–126 (FYYFLWGVSYSSGLFLLTALS). The Cytoplasmic portion of the chain corresponds to 127-148 (LDRCLLALCPRWYPGHRPARLP). A helical transmembrane segment spans residues 149–169 (LWVCAGVWVLATLFSVPWLVF). Over 170-194 (PEAAVWWYDLVICLDFWDTEELPLR) the chain is Extracellular. Residues 195-215 (MLEILGGFLPFLLLLVCHVLT) form a helical membrane-spanning segment. Residues 216 to 258 (QATACRTCCGHQPRRMACHGFARVAKTILSAYVVLRLPYQLAQ) lie on the Cytoplasmic side of the membrane. A helical membrane pass occupies residues 259–279 (LLYLAFLWDVYPGYLLWEALV). Residues 280-282 (YSD) are Extracellular-facing. A helical membrane pass occupies residues 283–303 (YLILLNSCLSPFLCLAASADL). Over 304–511 (RALLRTVLSS…PEEAPSAGPT (208 aa)) the chain is Cytoplasmic. Disordered regions lie at residues 328-349 (PAEPQTLPGPTSEGQSRLDSVV), 361-386 (SDSVVQPEVSPSAQPQSDSVAQPTVG), and 407-511 (PQLD…AGPT). Composition is skewed to polar residues over residues 335 to 345 (PGPTSEGQSRL) and 369 to 386 (VSPSAQPQSDSVAQPTVG). The segment covering 419 to 433 (PSAQPQSKSVVQPQV) has biased composition (low complexity). Composition is skewed to polar residues over residues 435-453 (PLTQPQLDPVAQPQSNTET) and 462-473 (SASNPGEENSSG).

Belongs to the G-protein coupled receptor 1 family.

Its subcellular location is the cell membrane. Orphan receptor. This is Probable G-protein coupled receptor 152 (Gpr152) from Mus musculus (Mouse).